Consider the following 1037-residue polypeptide: uncharacterized protein (1037 aa).

This is an uncharacterized protein from Saccharomyces cerevisiae (strain ATCC 204508 / S288c) (Baker's yeast).